A 295-amino-acid chain; its full sequence is Transcriptional regulator SirC (295 aa).

Residues 195 to 292 form the HTH araC/xylS-type domain; it reads EKVYNIIISD…KITPLSFMRT (98 aa). 2 DNA-binding regions (H-T-H motif) span residues 212 to 233 and 259 to 282; these read AEVAGKLFMSVSSLKRKLAAEE and ISQVATMCGYDTPSYFIAIFKRHF.

In terms of biological role, positive regulator of the expression of the invasion-associated type III secretion system encoded within SPI-1 (pathogenicity island 1). The sequence is that of Transcriptional regulator SirC (sirC) from Salmonella typhimurium (strain SL1344).